Reading from the N-terminus, the 108-residue chain is uncharacterized protein (108 aa).

Positions 20–74 (VRQRRTALILDQETLARRIGVSFQQIQKYERGRNRISASRLYDIAKALAVPIDYF) constitute an HTH cro/C1-type domain. A DNA-binding region (H-T-H motif) is located at residues 31–50 (QETLARRIGVSFQQIQKYER).

This is an uncharacterized protein from Rhodospirillum rubrum.